The sequence spans 412 residues: Serine--tRNA ligase (412 aa).

228 to 230 (TAE) serves as a coordination point for L-serine. Residue 259 to 261 (RKE) participates in ATP binding. An L-serine-binding site is contributed by Glu282. 346 to 349 (EISS) contacts ATP. Ser380 is a binding site for L-serine.

It belongs to the class-II aminoacyl-tRNA synthetase family. Type-1 seryl-tRNA synthetase subfamily. As to quaternary structure, homodimer. The tRNA molecule binds across the dimer.

It is found in the cytoplasm. The catalysed reaction is tRNA(Ser) + L-serine + ATP = L-seryl-tRNA(Ser) + AMP + diphosphate + H(+). It catalyses the reaction tRNA(Sec) + L-serine + ATP = L-seryl-tRNA(Sec) + AMP + diphosphate + H(+). The protein operates within aminoacyl-tRNA biosynthesis; selenocysteinyl-tRNA(Sec) biosynthesis; L-seryl-tRNA(Sec) from L-serine and tRNA(Sec): step 1/1. Catalyzes the attachment of serine to tRNA(Ser). Is also able to aminoacylate tRNA(Sec) with serine, to form the misacylated tRNA L-seryl-tRNA(Sec), which will be further converted into selenocysteinyl-tRNA(Sec). In Aliarcobacter butzleri (strain RM4018) (Arcobacter butzleri), this protein is Serine--tRNA ligase.